The sequence spans 185 residues: Large ribosomal subunit protein uL5 (185 aa).

Belongs to the universal ribosomal protein uL5 family. As to quaternary structure, part of the 50S ribosomal subunit; part of the 5S rRNA/L5/L18/L25 subcomplex. Contacts the 5S rRNA and the P site tRNA. Forms a bridge to the 30S subunit in the 70S ribosome.

In terms of biological role, this is one of the proteins that bind and probably mediate the attachment of the 5S RNA into the large ribosomal subunit, where it forms part of the central protuberance. In the 70S ribosome it contacts protein S13 of the 30S subunit (bridge B1b), connecting the 2 subunits; this bridge is implicated in subunit movement. Contacts the P site tRNA; the 5S rRNA and some of its associated proteins might help stabilize positioning of ribosome-bound tRNAs. This chain is Large ribosomal subunit protein uL5, found in Bartonella bacilliformis (strain ATCC 35685 / KC583 / Herrer 020/F12,63).